Reading from the N-terminus, the 204-residue chain is Thymidylate kinase (204 aa).

An ATP-binding site is contributed by 13–20 (GIDGSGKS).

It belongs to the thymidylate kinase family.

It catalyses the reaction dTMP + ATP = dTDP + ADP. Its function is as follows. Phosphorylation of dTMP to form dTDP in both de novo and salvage pathways of dTTP synthesis. This Leptospira interrogans serogroup Icterohaemorrhagiae serovar copenhageni (strain Fiocruz L1-130) protein is Thymidylate kinase.